Reading from the N-terminus, the 275-residue chain is Axoneme-associated protein mst101(3) (275 aa).

12 repeat units span residues K64–E79, K80–E95, K96–Q111, K112–E127, K128–E143, R144–A159, A160–K175, K181–A196, K197–V212, K215–A230, K231–A246, and K249–A264. The segment at K64–A264 is 12 X 16 AA tandem repeats of [KRA]-K-[KEM]-[CKA]-[AEKD]-[EA]-[ALE]-[AMK]-[FKAML]-[KQA]-[EQKA]-[KQCEM]-[ECLA]-[AEQ]-[AEQ]-[EQAKV].

Testis.

It localises to the cytoplasm. Its function is as follows. Possible structural role in the sperm tail. The protein is Axoneme-associated protein mst101(3) (mst101(3)) of Drosophila hydei (Fruit fly).